The following is a 34-amino-acid chain: Phospholipase A2 (34 aa).

His-18 is an active-site residue. Asp-19 is a binding site for Ca(2+).

The protein belongs to the phospholipase A2 family. Group I subfamily. D49 sub-subfamily. Requires Ca(2+) as cofactor. Contains 7 disulfide bonds. Expressed by the venom gland.

The protein localises to the secreted. The enzyme catalyses a 1,2-diacyl-sn-glycero-3-phosphocholine + H2O = a 1-acyl-sn-glycero-3-phosphocholine + a fatty acid + H(+). Its function is as follows. Snake venom phospholipase A2 (PLA2) that strongly inhibits platelet aggregation and has a strong anticoagulant activity. PLA2 catalyzes the calcium-dependent hydrolysis of the 2-acyl groups in 3-sn-phosphoglycerides. This Pseudechis papuanus (Papuan black snake) protein is Phospholipase A2.